An 835-amino-acid chain; its full sequence is Ribosome-releasing factor 2, mitochondrial (835 aa).

A mitochondrion-targeting transit peptide spans 1-50 (MPWCNTRLRTCGASPKIFLRRVRCPVLLHNWTIGRVSSVSKMILRFLRSY). The region spanning 57–343 (TRVRNIGIIA…AVVDYLPSPA (287 aa)) is the tr-type G domain. GTP is bound by residues 66–73 (AHIDAGKT), 131–135 (DTPGH), and 183–186 (NKMD).

This sequence belongs to the TRAFAC class translation factor GTPase superfamily. Classic translation factor GTPase family. EF-G/EF-2 subfamily.

It localises to the mitochondrion. Its function is as follows. Mitochondrial GTPase that mediates the disassembly of ribosomes from messenger RNA at the termination of mitochondrial protein biosynthesis. Not involved in the GTP-dependent ribosomal translocation step during translation elongation. The polypeptide is Ribosome-releasing factor 2, mitochondrial (Eremothecium gossypii (strain ATCC 10895 / CBS 109.51 / FGSC 9923 / NRRL Y-1056) (Yeast)).